The primary structure comprises 440 residues: 23S rRNA (uracil(1939)-C(5))-methyltransferase RlmD (440 aa).

A TRAM domain is found at 11 to 69 (STLDTKHQPVTIERLDHQGSGLAFLHKKPLFVDGALPGEEVLIQLTENKSKYARGQLIK). [4Fe-4S] cluster-binding residues include Cys-82, Cys-88, Cys-91, and Cys-169. S-adenosyl-L-methionine is bound by residues Gln-272, Phe-301, Asn-306, Glu-322, Asn-349, and Asp-370. Catalysis depends on Cys-396, which acts as the Nucleophile.

Belongs to the class I-like SAM-binding methyltransferase superfamily. RNA M5U methyltransferase family. RlmD subfamily.

It catalyses the reaction uridine(1939) in 23S rRNA + S-adenosyl-L-methionine = 5-methyluridine(1939) in 23S rRNA + S-adenosyl-L-homocysteine + H(+). Its function is as follows. Catalyzes the formation of 5-methyl-uridine at position 1939 (m5U1939) in 23S rRNA. The polypeptide is 23S rRNA (uracil(1939)-C(5))-methyltransferase RlmD (Vibrio cholerae serotype O1 (strain ATCC 39541 / Classical Ogawa 395 / O395)).